The primary structure comprises 391 residues: Probable sugar efflux transporter (391 aa).

A run of 12 helical transmembrane segments spans residues 16–36, 51–71, 82–102, 110–130, 138–158, 170–190, 210–230, 247–267, 277–297, 300–320, 338–358, and 361–381; these read VFVFSLSAFIFNTTEFVPVAL, VGLMITAYAWVVSLGSLPLML, LLFLFALFIFSHILSALAWNF, MGIAFAHSIFWSITASLVIRV, QALGLLALGSSLAMILGLPLG, TFGVIGGVATLIMLLMWKLLP, PLLVGIYLLVIMVISGHFTTY, ITTLMLFVFGLAGVVGSFLFG, FIAFAMVLVICPQLLLFVFKN, WVIFLQIFLWGIGITSLTIAL, IFSGSYNVGIGSGALFGSIVI, and LGLEYIGFVGGALGLLALFWL.

The protein belongs to the major facilitator superfamily. SotB (TC 2.A.1.2) family.

The protein localises to the cell inner membrane. Its function is as follows. Involved in the efflux of sugars. The physiological role may be the reduction of the intracellular concentration of toxic sugars or sugar metabolites. This Helicobacter pylori (strain J99 / ATCC 700824) (Campylobacter pylori J99) protein is Probable sugar efflux transporter.